The chain runs to 260 residues: NAD kinase (260 aa).

Catalysis depends on Asp-54, which acts as the Proton acceptor. Residues 54-55, 123-124, Arg-150, Asp-152, and 163-168 contribute to the NAD(+) site; these read DG, ND, and TAYSLS.

It belongs to the NAD kinase family. The cofactor is a divalent metal cation.

It is found in the cytoplasm. The catalysed reaction is NAD(+) + ATP = ADP + NADP(+) + H(+). Functionally, involved in the regulation of the intracellular balance of NAD and NADP, and is a key enzyme in the biosynthesis of NADP. Catalyzes specifically the phosphorylation on 2'-hydroxyl of the adenosine moiety of NAD to yield NADP. The protein is NAD kinase of Caldicellulosiruptor saccharolyticus (strain ATCC 43494 / DSM 8903 / Tp8T 6331).